Consider the following 206-residue polypeptide: MAVKKIAIFGATGQTGLTTLAQAVQAGYEVTVLVRDSSRLPSEGPRPAHVVVGDVLQAADVDKTVAGQDAVIVLLGTRNDLSPTTVMSEGARNIVAAMKAHGVDKVVACTSAFLLWDPTKVPPRLQAVTDDHIRMHKVLRESGLKYVAVMPPHIGDQPLTGAYTVTLDGRGPSRVISKHDLGHFMLRCLTTDEYDGHSTYPSHQYQ.

Positions 10, 12, 13, 14, 15, 35, 38, and 39 each coordinate NADP(+). Ser42 carries the post-translational modification Phosphoserine. Residues Asp54, Val55, Leu75, Gly76, and Arg78 each coordinate NADP(+). A Phosphoserine modification is found at Ser82. Residues Met87, Cys109, His132, His153, and Ile154 each contribute to the NADP(+) site. The active-site S-nitroso-cysteine intermediate; for S-nitroso-CoA-dependent nitrosyltransferase activity is the Cys109. Residue Cys188 is the S-nitroso-cysteine intermediate; for S-nitroso-CoA-dependent nitrosyltransferase activity of the active site.

This sequence belongs to the BLVRB family. As to quaternary structure, monomer. In terms of tissue distribution, predominantly expressed in liver and erythrocytes. At lower levels in heart, lung, adrenal gland and cerebrum. Expressed in adult red blood cells.

It is found in the cytoplasm. The catalysed reaction is reduced riboflavin + NADP(+) = riboflavin + NADPH + 2 H(+). The enzyme catalyses bilirubin IXbeta + NADP(+) = biliverdin IXbeta + NADPH + H(+). It carries out the reaction FMNH2 + NAD(+) = FMN + NADH + 2 H(+). It catalyses the reaction FMNH2 + NADP(+) = FMN + NADPH + 2 H(+). The catalysed reaction is S-nitroso-CoA + L-cysteinyl-[protein] = S-nitroso-L-cysteinyl-[protein] + CoA. The enzyme catalyses L-cysteinyl-[SCAN] + S-nitroso-CoA = S-nitroso-L-cysteinyl-[SCAN] + CoA. It carries out the reaction S-nitroso-L-cysteinyl-[SCAN] + L-cysteinyl-[protein] = L-cysteinyl-[SCAN] + S-nitroso-L-cysteinyl-[protein]. Mesobiliverdin acts as a competitive inhibitor for flavin reduction, indicating that flavin and tetrapyrrole substrates compete for the same site. Inhibited by a wide range of xanthene-based drugs, such as phloxine B, erythrosin B, tamibarotene, sulfasalazine, olsalazine, febuxostat, ataluren (PTC124) and deferasirox. Enzyme that can both act as a NAD(P)H-dependent reductase and a S-nitroso-CoA-dependent nitrosyltransferase. Promotes fetal heme degradation during development. Also expressed in adult tissues, where it acts as a regulator of hematopoiesis, intermediary metabolism (glutaminolysis, glycolysis, TCA cycle and pentose phosphate pathway) and insulin signaling. Has a broad specificity oxidoreductase activity by catalyzing the NAD(P)H-dependent reduction of a variety of flavins, such as riboflavin, FAD or FMN, biliverdins, methemoglobin and PQQ (pyrroloquinoline quinone). Contributes to fetal heme catabolism by catalyzing reduction of biliverdin IXbeta into bilirubin IXbeta in the liver. Biliverdin IXbeta, which constitutes the major heme catabolite in the fetus is not present in adult. Does not reduce bilirubin IXalpha. Can also reduce the complexed Fe(3+) iron to Fe(2+) in the presence of FMN and NADPH. Acts as a protein nitrosyltransferase by catalyzing nitrosylation of cysteine residues of target proteins, such as HMOX2, INSR and IRS1. S-nitroso-CoA-dependent nitrosyltransferase activity is mediated via a 'ping-pong' mechanism: BLVRB first associates with both S-nitroso-CoA and protein substrate, nitric oxide group is then transferred from S-nitroso-CoA to Cys-109 and Cys-188 residues of BLVRB and from S-nitroso-BLVRB to the protein substrate. Inhibits insulin signaling by mediating nitrosylation of INSR and IRS1, leading to their inhibition. The sequence is that of Flavin reductase (NADPH) from Homo sapiens (Human).